Reading from the N-terminus, the 365-residue chain is Putative 2-dehydropantoate 2-reductase (365 aa).

It belongs to the ketopantoate reductase family.

The enzyme catalyses (R)-pantoate + NADP(+) = 2-dehydropantoate + NADPH + H(+). It functions in the pathway cofactor biosynthesis; (R)-pantothenate biosynthesis; (R)-pantoate from 3-methyl-2-oxobutanoate: step 2/2. Functionally, catalyzes the NADPH-dependent reduction of ketopantoate into pantoic acid. This Arabidopsis thaliana (Mouse-ear cress) protein is Putative 2-dehydropantoate 2-reductase (KPR).